A 240-amino-acid polypeptide reads, in one-letter code: Ribonuclease PH (240 aa).

Residues Arg-87 and 125-127 (GTR) contribute to the phosphate site.

This sequence belongs to the RNase PH family. In terms of assembly, homohexameric ring arranged as a trimer of dimers.

It carries out the reaction tRNA(n+1) + phosphate = tRNA(n) + a ribonucleoside 5'-diphosphate. Functionally, phosphorolytic 3'-5' exoribonuclease that plays an important role in tRNA 3'-end maturation. Removes nucleotide residues following the 3'-CCA terminus of tRNAs; can also add nucleotides to the ends of RNA molecules by using nucleoside diphosphates as substrates, but this may not be physiologically important. Probably plays a role in initiation of 16S rRNA degradation (leading to ribosome degradation) during starvation. This chain is Ribonuclease PH, found in Pseudomonas fluorescens (strain SBW25).